A 1220-amino-acid chain; its full sequence is Limbin (1220 aa).

A signal peptide spans 1 to 29; sequence MGATGPTGAGGRATWVLAGNILAAALVLG. Residues 30–210 are Extracellular-facing; the sequence is SGPRALPPSF…VLPNHGLHAA (181 aa). The interval 38-59 is disordered; sequence SFPALGPGSPSRPGPAGPWASS. N-linked (GlcNAc...) asparagine glycans are attached at residues Asn-100, Asn-109, and Asn-130. The chain crosses the membrane as a helical span at residues 211–231; sequence GFIAAFLISLLLTVAALFFLA. Over 232–1220 the chain is Cytoplasmic; sequence RGRCLQGGML…KKANRALGLD (989 aa). 4 coiled-coil regions span residues 355-404, 563-644, 854-875, and 920-1005; these read EEYE…SAAE, KQKL…AALD, GELL…AESL, and QILE…VREE.

As to quaternary structure, component of the EvC complex composed of EFCAB7, IQCE, EVC2 and EVC; built from two subcomplexes, EVC2:EVC and EFCAB7:IQCE. Interacts with EVC. Interacts (via N-terminal end) with EFCAB7. Interacts (via N-terminal end) with IQCE. As to expression, expressed in long and cranial bones, kidney and heart. Strongly expressed in proliferating chondrocytes, osteoblasts and osteoclasts.

The protein localises to the cell membrane. Its subcellular location is the cytoplasm. It is found in the cytoskeleton. The protein resides in the cilium basal body. It localises to the cell projection. The protein localises to the cilium. Its subcellular location is the cilium membrane. It is found in the nucleus. Functionally, component of the EvC complex that positively regulates ciliary Hedgehog (Hh) signaling. Plays a critical role in bone formation and skeletal development. May be involved in early embryonic morphogenesis. The chain is Limbin (Evc2) from Mus musculus (Mouse).